The primary structure comprises 472 residues: Nuclear receptor subfamily 0 group B member 1 (472 aa).

Repeat copies occupy residues 1–67 (MAGE…YRCC), 68–135 (FCGE…YRCC), and 136–202 (FCGE…YRSY). Residues 1-255 (MAGEDHPWQG…RLITLKDPQV (255 aa)) form a 4 X 67 AA tandem repeats region. 3 short sequence motifs (LXXLL motif) span residues 13–17 (LYNLL), 80–84 (LYSML), and 148–152 (LYSLL). In terms of domain architecture, NR LBD spans 190–471 (QSTQAMAFLY…DMMLEMLCAK (282 aa)). A 4; truncated repeat occupies 203-255 (VCGEEQPQQISVASGTPVSADQTPATPQEQPRAPWWDASPGVQRLITLKDPQV). Positions 214 to 231 (VASGTPVSADQTPATPQE) are enriched in polar residues. Disordered stretches follow at residues 214–238 (VASG…APWW) and 324–343 (TTRR…ATEQ). The short motif at 463 to 468 (MMLEML) is the AF-2 motif element.

Belongs to the nuclear hormone receptor family. NR0 subfamily. Homodimer. Interacts with NR5A1, NR5A2, NR0B2 and with COPS2. Interacts with ESRRB; represses ESRRB activity at the GATA6 promoter. Expressed in adult cerebral cortex, spinal cord, thymus, heart, lung, ovary, testis, adrenal gland, hypothalamus, spleen and kidney.

It is found in the nucleus. Its subcellular location is the cytoplasm. Its function is as follows. Nuclear receptor that lacks a DNA-binding domain and acts as a corepressor that inhibits the transcriptional activity of other nuclear receptors through heterodimeric interactions. Component of a cascade required for the development of the hypothalamic-pituitary-adrenal-gonadal axis. May also have a role in the development of the embryo and in the maintenance of embryonic stem cell pluripotency. This chain is Nuclear receptor subfamily 0 group B member 1 (Nr0b1), found in Mus musculus (Mouse).